The chain runs to 230 residues: Large ribosomal subunit protein uL1 (230 aa).

Belongs to the universal ribosomal protein uL1 family. In terms of assembly, part of the 50S ribosomal subunit.

In terms of biological role, binds directly to 23S rRNA. The L1 stalk is quite mobile in the ribosome, and is involved in E site tRNA release. Functionally, protein L1 is also a translational repressor protein, it controls the translation of the L11 operon by binding to its mRNA. This chain is Large ribosomal subunit protein uL1, found in Methylobacillus flagellatus (strain ATCC 51484 / DSM 6875 / VKM B-1610 / KT).